A 227-amino-acid chain; its full sequence is Protein LppM (227 aa).

An N-terminal signal peptide occupies residues 1-24 (MARTRRRGMLAIAMLLMLVPLATG). Cysteine 25 carries N-palmitoyl cysteine lipidation. Cysteine 25 carries S-diacylglycerol cysteine lipidation. Positions 26–185 (LRVRASITIS…ARYTDPNTRS (160 aa)) are important for bacterial uptake by host macrophages. The chain crosses the membrane as a helical span at residues 190 to 210 (GIWLGIAAFAAAGVVAVLAWI).

In terms of processing, a shorter form (about 20 kDa) is secreted; upon overexpression of the whole protein in M.smegmatis the C-terminus of the short form is about residue 187, suggesting it is generated by cleavage of the protein before its C-terminal transmembrane domain.

It is found in the membrane. The protein resides in the secreted. It localises to the cell wall. Its function is as follows. A putative lipoprotein that seems to be specialized for the initial steps of macrophage infection. A non-acylated fragment (residues 26-185) binds phosphatidyl-myo-inositol mannosides (PIMs). Limits, in a TLR2-dependent fashion, bacterial uptake by host (mouse); this effect may be mediated by nonacylated fragment 26-185. Plays a TLR2-dependent role in host phagosome maturation arrest. Plays a TLR2-independent role in chemokine production during the first 24 hours of mouse infection. The polypeptide is Protein LppM (lppM) (Mycobacterium tuberculosis (strain ATCC 25618 / H37Rv)).